Here is a 109-residue protein sequence, read N- to C-terminus: Large ribosomal subunit protein uL24 (109 aa).

The protein belongs to the universal ribosomal protein uL24 family. In terms of assembly, part of the 50S ribosomal subunit.

Functionally, one of two assembly initiator proteins, it binds directly to the 5'-end of the 23S rRNA, where it nucleates assembly of the 50S subunit. In terms of biological role, one of the proteins that surrounds the polypeptide exit tunnel on the outside of the subunit. This Legionella pneumophila (strain Corby) protein is Large ribosomal subunit protein uL24.